A 337-amino-acid polypeptide reads, in one-letter code: Inositol 2-dehydrogenase (337 aa).

This sequence belongs to the Gfo/Idh/MocA family. Homotetramer.

It carries out the reaction myo-inositol + NAD(+) = scyllo-inosose + NADH + H(+). Involved in the oxidation of myo-inositol (MI) to 2-keto-myo-inositol (2KMI or 2-inosose). The sequence is that of Inositol 2-dehydrogenase from Serratia proteamaculans (strain 568).